Here is a 72-residue protein sequence, read N- to C-terminus: Large ribosomal subunit protein bL31 (72 aa).

Belongs to the bacterial ribosomal protein bL31 family. Type A subfamily. Part of the 50S ribosomal subunit.

Functionally, binds the 23S rRNA. This Rhodospirillum rubrum (strain ATCC 11170 / ATH 1.1.1 / DSM 467 / LMG 4362 / NCIMB 8255 / S1) protein is Large ribosomal subunit protein bL31.